Consider the following 390-residue polypeptide: Two-component response regulator ORR29 (390 aa).

The Response regulatory domain maps to 13–130; sequence SAMVIDEDKC…TIKNLWQYVD (118 aa). At Asp65 the chain carries 4-aspartylphosphate. Positions 169 to 226 form a DNA-binding region, myb-like GARP; the sequence is KKYYLMWTPHLQKKFLHALQILGKDASPKNIKKIMGVDNIDCRQIAAHLQKHRLRLTK. 2 disordered regions span residues 233 to 271 and 303 to 339; these read FTTD…QPTE and SKHS…SGDH. Residues 257–271 show a composition bias toward polar residues; sequence NASTLQPRSNTQPTE.

It belongs to the ARR family. Type-B subfamily. Post-translationally, two-component system major event consists of a His-to-Asp phosphorelay between a sensor histidine kinase (HK) and a response regulator (RR). In plants, the His-to-Asp phosphorelay involves an additional intermediate named Histidine-containing phosphotransfer protein (HPt). This multistep phosphorelay consists of a His-Asp-His-Asp sequential transfer of a phosphate group between first a His and an Asp of the HK protein, followed by the transfer to a conserved His of the HPt protein and finally the transfer to an Asp in the receiver domain of the RR protein.

The protein localises to the cytoplasm. It localises to the cytosol. It is found in the nucleus. In terms of biological role, transcriptional activator that binds specific DNA sequence. Functions as a response regulator involved in His-to-Asp phosphorelay signal transduction system. Phosphorylation of the Asp residue in the receiver domain activates the ability of the protein to promote the transcription of target genes. May directly activate some type-A response regulators in response to cytokinins. Functions as a response regulator in response to cytokinins. This chain is Two-component response regulator ORR29, found in Oryza sativa subsp. japonica (Rice).